Consider the following 169-residue polypeptide: Vimentin-type intermediate filament-associated coiled-coil protein (169 aa).

A coiled-coil region spans residues 7–89; that stretch reads LQIREANAHL…VHSLQATVHQ (83 aa). Over residues 126 to 135 the composition is skewed to low complexity; it reads RLGPLPASDP. Positions 126–169 are disordered; it reads RLGPLPASDPGHPPPGGPGPPLDNSTGEEADRDHLQPAVFGTTV. A compositionally biased stretch (pro residues) spans 136–146; sequence GHPPPGGPGPP.

The protein localises to the cytoplasm. The sequence is that of Vimentin-type intermediate filament-associated coiled-coil protein (VMAC) from Homo sapiens (Human).